Consider the following 402-residue polypeptide: CCA-adding enzyme (402 aa).

Residues glycine 32 and arginine 35 each contribute to the ATP site. CTP contacts are provided by glycine 32 and arginine 35. 2 residues coordinate Mg(2+): aspartate 45 and aspartate 47. ATP contacts are provided by arginine 116, aspartate 159, arginine 162, arginine 165, and arginine 168. Arginine 116, aspartate 159, arginine 162, arginine 165, and arginine 168 together coordinate CTP.

This sequence belongs to the tRNA nucleotidyltransferase/poly(A) polymerase family. Bacterial CCA-adding enzyme type 3 subfamily. As to quaternary structure, homodimer. The cofactor is Mg(2+).

The catalysed reaction is a tRNA precursor + 2 CTP + ATP = a tRNA with a 3' CCA end + 3 diphosphate. The enzyme catalyses a tRNA with a 3' CCA end + 2 CTP + ATP = a tRNA with a 3' CCACCA end + 3 diphosphate. Catalyzes the addition and repair of the essential 3'-terminal CCA sequence in tRNAs without using a nucleic acid template. Adds these three nucleotides in the order of C, C, and A to the tRNA nucleotide-73, using CTP and ATP as substrates and producing inorganic pyrophosphate. tRNA 3'-terminal CCA addition is required both for tRNA processing and repair. Also involved in tRNA surveillance by mediating tandem CCA addition to generate a CCACCA at the 3' terminus of unstable tRNAs. While stable tRNAs receive only 3'-terminal CCA, unstable tRNAs are marked with CCACCA and rapidly degraded. The sequence is that of CCA-adding enzyme from Streptococcus pyogenes serotype M4 (strain MGAS10750).